The sequence spans 497 residues: Penton protein (497 aa).

The Cell attachment site signature appears at 293–295 (RGD).

It belongs to the adenoviridae penton family. As to quaternary structure, interacts (via the cell attachment site RGD) with host heterodimer ITGAV-ITGB5; this interaction promotes virus internalization. Interacts with host WWP1 and WWP2. Interacts with the fiber protein (via N-terminal tail region). Interacts with the capsid vertex protein; this interaction binds the penton base to neighboring peripentonal hexons.

The protein localises to the virion. Its subcellular location is the host nucleus. Functionally, major capsid protein that self-associates to form penton base pentamers, each in the shape of a pentagon, situated at the 12 vertices of the pseudo T=25 capsid. Involved in virus secondary attachment to host cell after initial attachment by the fiber protein. Binds host integrin heterodimer ITGAV-ITGB5 (alphaV-beta5) thereby triggering clathrin-mediated endocytosis of virions. Mediates initial virus attachment to CXADR-negative cells. Binding to integrins ITGAV-ITGB5 also seems to induce macropinocytosis uptake of the virus. As the virus enters the host cell, penton proteins are shed concomitant with virion acidification in the endosome. The polypeptide is Penton protein (Human adenovirus A serotype 12 (HAdV-12)).